The following is a 218-amino-acid chain: Thiamine-phosphate synthase (218 aa).

4-amino-2-methyl-5-(diphosphooxymethyl)pyrimidine contacts are provided by residues 43 to 47 (QFRDK) and asparagine 78. Positions 79 and 98 each coordinate Mg(2+). Residue serine 117 coordinates 4-amino-2-methyl-5-(diphosphooxymethyl)pyrimidine. 143-145 (TNS) contributes to the 2-[(2R,5Z)-2-carboxy-4-methylthiazol-5(2H)-ylidene]ethyl phosphate binding site. Lysine 146 is a 4-amino-2-methyl-5-(diphosphooxymethyl)pyrimidine binding site. Residues glycine 174 and 194 to 195 (IS) contribute to the 2-[(2R,5Z)-2-carboxy-4-methylthiazol-5(2H)-ylidene]ethyl phosphate site.

This sequence belongs to the thiamine-phosphate synthase family. Requires Mg(2+) as cofactor.

The enzyme catalyses 2-[(2R,5Z)-2-carboxy-4-methylthiazol-5(2H)-ylidene]ethyl phosphate + 4-amino-2-methyl-5-(diphosphooxymethyl)pyrimidine + 2 H(+) = thiamine phosphate + CO2 + diphosphate. It catalyses the reaction 2-(2-carboxy-4-methylthiazol-5-yl)ethyl phosphate + 4-amino-2-methyl-5-(diphosphooxymethyl)pyrimidine + 2 H(+) = thiamine phosphate + CO2 + diphosphate. It carries out the reaction 4-methyl-5-(2-phosphooxyethyl)-thiazole + 4-amino-2-methyl-5-(diphosphooxymethyl)pyrimidine + H(+) = thiamine phosphate + diphosphate. It participates in cofactor biosynthesis; thiamine diphosphate biosynthesis; thiamine phosphate from 4-amino-2-methyl-5-diphosphomethylpyrimidine and 4-methyl-5-(2-phosphoethyl)-thiazole: step 1/1. Condenses 4-methyl-5-(beta-hydroxyethyl)thiazole monophosphate (THZ-P) and 2-methyl-4-amino-5-hydroxymethyl pyrimidine pyrophosphate (HMP-PP) to form thiamine monophosphate (TMP). The polypeptide is Thiamine-phosphate synthase (Lactococcus lactis subsp. cremoris (strain SK11)).